We begin with the raw amino-acid sequence, 430 residues long: Enolase (430 aa).

Position 162 (Gln-162) interacts with (2R)-2-phosphoglycerate. Glu-204 acts as the Proton donor in catalysis. Asp-241, Glu-283, and Asp-310 together coordinate Mg(2+). (2R)-2-phosphoglycerate is bound by residues Lys-335, Arg-364, Ser-365, and Lys-386. Lys-335 serves as the catalytic Proton acceptor.

This sequence belongs to the enolase family. Requires Mg(2+) as cofactor.

The protein localises to the cytoplasm. The protein resides in the secreted. Its subcellular location is the cell surface. It carries out the reaction (2R)-2-phosphoglycerate = phosphoenolpyruvate + H2O. It functions in the pathway carbohydrate degradation; glycolysis; pyruvate from D-glyceraldehyde 3-phosphate: step 4/5. Catalyzes the reversible conversion of 2-phosphoglycerate (2-PG) into phosphoenolpyruvate (PEP). It is essential for the degradation of carbohydrates via glycolysis. The chain is Enolase from Mycobacteroides abscessus (strain ATCC 19977 / DSM 44196 / CCUG 20993 / CIP 104536 / JCM 13569 / NCTC 13031 / TMC 1543 / L948) (Mycobacterium abscessus).